The following is a 593-amino-acid chain: MTADSVLSIPPYKADDQDVVAELNSRFGAETFTVQSTCTDMPVLWVAREKLIEVLRFLRNLPRPYVMLYDLHGVDERLRTQRRGLPEADFSVFYHLLSIERNSDVMIKVALKEGDLKLPSATGIWPNANWYEREIWDMYGIHIEGHPHLTRILMPPTWEGHPLRKDYPARATEFDPYSLSAAKQDLEQEALRFKPEEWGMKRGGEHEDFMFLNLGPNHPSAHGAFRIILQLDGEEIVDCVPEIGYHHRGAEKMAERQSWHSFIPYTDRIDYLGGVMNNLPYVLAVEKLAGIKVPQRVDVIRVMMAEFFRILNHLLYLGTYIQDVGAMTPVFFTFTDRQRAYKVVEAITGFRLHPAWYRIGGVAHDLPRGWDALVKEFVEWMPKRLDEYEKAALQNSILRGRTMDVARYDTRQALEWGVTGAGLRATGLDFDLRKARPYSGYENFEFEVPLAHNGDAYDRCMVKLGEMRQSLRIIEQCRRNMPEGPYKADHPLTTPPPKERTLQHIETLITHFLQVSWGPVMPANESFQMIEATKGINSYYLTSDGSTMSYRTRIRTPSYAHLQQIPSVIRGSMVADLIAYLGSIDFVMADVDR.

An NADH dehydrogenase I subunit C region spans residues 1 to 184 (MTADSVLSIP…DPYSLSAAKQ (184 aa)). Residues 208–593 (DFMFLNLGPN…IDFVMADVDR (386 aa)) form an NADH dehydrogenase I subunit D region.

It in the N-terminal section; belongs to the complex I 30 kDa subunit family. The protein in the C-terminal section; belongs to the complex I 49 kDa subunit family. As to quaternary structure, NDH-1 is composed of 13 different subunits. Subunits NuoB, CD, E, F, and G constitute the peripheral sector of the complex.

The protein resides in the cell inner membrane. It catalyses the reaction a quinone + NADH + 5 H(+)(in) = a quinol + NAD(+) + 4 H(+)(out). Its function is as follows. NDH-1 shuttles electrons from NADH, via FMN and iron-sulfur (Fe-S) centers, to quinones in the respiratory chain. The immediate electron acceptor for the enzyme in this species is believed to be ubiquinone. Couples the redox reaction to proton translocation (for every two electrons transferred, four hydrogen ions are translocated across the cytoplasmic membrane), and thus conserves the redox energy in a proton gradient. The sequence is that of NADH-quinone oxidoreductase subunit C/D from Azotobacter vinelandii (strain DJ / ATCC BAA-1303).